A 387-amino-acid chain; its full sequence is Killer cell lectin-like receptor subfamily G member 2 (387 aa).

The interval 1-105 is disordered; the sequence is MEPPQVPAEA…SGEPAPASWA (105 aa). Positions 15 to 27 are enriched in basic and acidic residues; sequence ASEDSPRPERTGW. The residue at position 143 (Ser-143) is a Phosphoserine. A disordered region spans residues 155-174; sequence QWLPRAPSPGSTWSRGSPLA. The chain crosses the membrane as a helical span at residues 241-261; it reads WALVVMAVLLAVCTVAVVALA. Residues 278–383 form the C-type lectin domain; sequence SQEQCYYLSE…CSSPRPWVCA (106 aa). Cystine bridges form between Cys-299–Cys-382 and Cys-361–Cys-374.

The protein resides in the membrane. The protein is Killer cell lectin-like receptor subfamily G member 2 (Klrg2) of Mus musculus (Mouse).